Here is a 345-residue protein sequence, read N- to C-terminus: Ferrochelatase (345 aa).

Fe cation contacts are provided by His215 and Glu296.

This sequence belongs to the ferrochelatase family.

It localises to the cytoplasm. The catalysed reaction is heme b + 2 H(+) = protoporphyrin IX + Fe(2+). It functions in the pathway porphyrin-containing compound metabolism; protoheme biosynthesis; protoheme from protoporphyrin-IX: step 1/1. Its function is as follows. Catalyzes the ferrous insertion into protoporphyrin IX. Essential for normal nodule development. The polypeptide is Ferrochelatase (Bradyrhizobium diazoefficiens (strain JCM 10833 / BCRC 13528 / IAM 13628 / NBRC 14792 / USDA 110)).